The chain runs to 208 residues: dITP/XTP pyrophosphatase (208 aa).

16–21 (SNNKGK) lines the substrate pocket. Aspartate 79 acts as the Proton acceptor in catalysis. Aspartate 79 serves as a coordination point for Mg(2+). Substrate contacts are provided by residues serine 80, 166–169 (FGYD), lysine 189, and 194–195 (HR).

It belongs to the HAM1 NTPase family. In terms of assembly, homodimer. Mg(2+) is required as a cofactor.

It catalyses the reaction XTP + H2O = XMP + diphosphate + H(+). The enzyme catalyses dITP + H2O = dIMP + diphosphate + H(+). The catalysed reaction is ITP + H2O = IMP + diphosphate + H(+). Its function is as follows. Pyrophosphatase that catalyzes the hydrolysis of nucleoside triphosphates to their monophosphate derivatives, with a high preference for the non-canonical purine nucleotides XTP (xanthosine triphosphate), dITP (deoxyinosine triphosphate) and ITP. Seems to function as a house-cleaning enzyme that removes non-canonical purine nucleotides from the nucleotide pool, thus preventing their incorporation into DNA/RNA and avoiding chromosomal lesions. This is dITP/XTP pyrophosphatase from Acinetobacter baumannii (strain ACICU).